The following is a 283-amino-acid chain: 1D-myo-inositol 2-acetamido-2-deoxy-alpha-D-glucopyranoside deacetylase (283 aa).

His7, Asp10, and His148 together coordinate Zn(2+).

This sequence belongs to the MshB deacetylase family. It depends on Zn(2+) as a cofactor.

The enzyme catalyses 1D-myo-inositol 2-acetamido-2-deoxy-alpha-D-glucopyranoside + H2O = 1D-myo-inositol 2-amino-2-deoxy-alpha-D-glucopyranoside + acetate. In terms of biological role, catalyzes the deacetylation of 1D-myo-inositol 2-acetamido-2-deoxy-alpha-D-glucopyranoside (GlcNAc-Ins) in the mycothiol biosynthesis pathway. This Gordonia bronchialis (strain ATCC 25592 / DSM 43247 / BCRC 13721 / JCM 3198 / KCTC 3076 / NBRC 16047 / NCTC 10667) (Rhodococcus bronchialis) protein is 1D-myo-inositol 2-acetamido-2-deoxy-alpha-D-glucopyranoside deacetylase.